The following is a 167-amino-acid chain: uncharacterized protein (167 aa).

Residues Leu39–Ser59 form a helical membrane-spanning segment. Positions Leu92 to Thr122 form a coiled coil. The tract at residues Arg134 to Asp167 is disordered. A compositionally biased stretch (basic and acidic residues) spans Glu154–Asp167.

Its subcellular location is the mitochondrion membrane. This is an uncharacterized protein from Arabidopsis thaliana (Mouse-ear cress).